Here is a 328-residue protein sequence, read N- to C-terminus: GTP 3',8-cyclase (328 aa).

A Radical SAM core domain is found at glycine 9–alanine 229. Arginine 18 provides a ligand contact to GTP. [4Fe-4S] cluster-binding residues include cysteine 25 and cysteine 29. S-adenosyl-L-methionine is bound at residue tyrosine 31. Cysteine 32 contributes to the [4Fe-4S] cluster binding site. Residue arginine 60 participates in GTP binding. Glycine 64 contacts S-adenosyl-L-methionine. Threonine 94 serves as a coordination point for GTP. Serine 118 lines the S-adenosyl-L-methionine pocket. Lysine 154 contributes to the GTP binding site. Methionine 188 contacts S-adenosyl-L-methionine. Positions 252 and 255 each coordinate [4Fe-4S] cluster. Arginine 257–arginine 259 lines the GTP pocket. Cysteine 269 contributes to the [4Fe-4S] cluster binding site.

The protein belongs to the radical SAM superfamily. MoaA family. As to quaternary structure, monomer and homodimer. Requires [4Fe-4S] cluster as cofactor.

The enzyme catalyses GTP + AH2 + S-adenosyl-L-methionine = (8S)-3',8-cyclo-7,8-dihydroguanosine 5'-triphosphate + 5'-deoxyadenosine + L-methionine + A + H(+). Its pathway is cofactor biosynthesis; molybdopterin biosynthesis. Catalyzes the cyclization of GTP to (8S)-3',8-cyclo-7,8-dihydroguanosine 5'-triphosphate. This Rhodobacter capsulatus (Rhodopseudomonas capsulata) protein is GTP 3',8-cyclase.